The following is a 217-amino-acid chain: Adenosylcobinamide-GDP ribazoletransferase (217 aa).

A run of 5 helical transmembrane segments spans residues 6-26 (ALLS…FKCA), 39-61 (GPAA…LLLM), 95-115 (GTGG…STAS), 116-136 (PLQL…VAAF), and 162-182 (ALAV…AVAL).

It belongs to the CobS family. The cofactor is Mg(2+).

The protein localises to the cell membrane. It catalyses the reaction alpha-ribazole + adenosylcob(III)inamide-GDP = adenosylcob(III)alamin + GMP + H(+). It carries out the reaction alpha-ribazole 5'-phosphate + adenosylcob(III)inamide-GDP = adenosylcob(III)alamin 5'-phosphate + GMP + H(+). Its pathway is cofactor biosynthesis; adenosylcobalamin biosynthesis; adenosylcobalamin from cob(II)yrinate a,c-diamide: step 7/7. Functionally, joins adenosylcobinamide-GDP and alpha-ribazole to generate adenosylcobalamin (Ado-cobalamin). Also synthesizes adenosylcobalamin 5'-phosphate from adenosylcobinamide-GDP and alpha-ribazole 5'-phosphate. The protein is Adenosylcobinamide-GDP ribazoletransferase of Pyrobaculum calidifontis (strain DSM 21063 / JCM 11548 / VA1).